The following is a 260-amino-acid chain: tRNA pseudouridine synthase A (260 aa).

The active-site Nucleophile is the D60. Position 118 (Y118) interacts with substrate.

This sequence belongs to the tRNA pseudouridine synthase TruA family. Homodimer.

It carries out the reaction uridine(38/39/40) in tRNA = pseudouridine(38/39/40) in tRNA. Formation of pseudouridine at positions 38, 39 and 40 in the anticodon stem and loop of transfer RNAs. The protein is tRNA pseudouridine synthase A of Leuconostoc citreum (strain KM20).